A 349-amino-acid polypeptide reads, in one-letter code: DNA-directed RNA polymerase subunit alpha (349 aa).

The tract at residues 1–226 (MLIAQRPTLV…GLFGLAQELN (226 aa)) is alpha N-terminal domain (alpha-NTD). An alpha C-terminal domain (alpha-CTD) region spans residues 241 to 349 (AALAADLALP…GAEFVETEQY (109 aa)). Residues 308 to 349 (LKDSPPGFDPRQAVDTYGTDSYNPAFSDPSDDGAEFVETEQY) form a disordered region. The segment covering 336 to 349 (PSDDGAEFVETEQY) has biased composition (acidic residues).

This sequence belongs to the RNA polymerase alpha chain family. As to quaternary structure, homodimer. The RNAP catalytic core consists of 2 alpha, 1 beta, 1 beta' and 1 omega subunit. When a sigma factor is associated with the core the holoenzyme is formed, which can initiate transcription.

It carries out the reaction RNA(n) + a ribonucleoside 5'-triphosphate = RNA(n+1) + diphosphate. In terms of biological role, DNA-dependent RNA polymerase catalyzes the transcription of DNA into RNA using the four ribonucleoside triphosphates as substrates. This chain is DNA-directed RNA polymerase subunit alpha, found in Frankia alni (strain DSM 45986 / CECT 9034 / ACN14a).